The following is a 452-amino-acid chain: Protein disulfide-isomerase TMX3 (452 aa).

Residues 1–26 (MAAAGLCFILAIVSSTSLLASVPVSA) form the signal peptide. The Thioredoxin domain occupies 27–128 (LVEDLDDSFK…KEDIVEFANR (102 aa)). Residues 27–375 (LVEDLDDSFK…TVVSVFKSSP (349 aa)) lie on the Lumenal side of the membrane. Catalysis depends on nucleophile residues Cys-53 and Cys-56. A disulfide bond links Cys-53 and Cys-56. N-linked (GlcNAc...) asparagine glycosylation is found at Asn-258 and Asn-313. Residues 376 to 396 (LLGCFLFGLPLGVISIMCYGI) traverse the membrane as a helical segment. Residues 397–452 (CTADTEDGSEEMTRKDVIDQNASDEGSDEEEEKGREITDVSDEDQQEKDFMEKKID) lie on the Cytoplasmic side of the membrane. Residues 405–452 (SEEMTRKDVIDQNASDEGSDEEEEKGREITDVSDEDQQEKDFMEKKID) are disordered. A compositionally biased stretch (basic and acidic residues) spans 443–452 (EKDFMEKKID). The Di-lysine motif signature appears at 449–452 (KKID).

Belongs to the protein disulfide isomerase family.

The protein resides in the endoplasmic reticulum membrane. The catalysed reaction is Catalyzes the rearrangement of -S-S- bonds in proteins.. Functionally, probable disulfide isomerase, which participates in the folding of proteins containing disulfide bonds. May act as a dithiol oxidase. Acts as a regulator of endoplasmic reticulum-mitochondria contact sites via its ability to regulate redox signals. The chain is Protein disulfide-isomerase TMX3 (tmx3) from Xenopus laevis (African clawed frog).